Here is a 174-residue protein sequence, read N- to C-terminus: ATP synthase subunit d, mitochondrial (174 aa).

Ser2 is modified (N-acetylserine).

This sequence belongs to the ATPase d subunit family.

The protein localises to the mitochondrion inner membrane. In terms of biological role, mitochondrial membrane ATP synthase (F(1)F(0) ATP synthase or Complex V) produces ATP from ADP in the presence of a proton gradient across the membrane which is generated by electron transport complexes of the respiratory chain. F-type ATPases consist of two structural domains, F(1) - containing the extramembraneous catalytic core, and F(0) - containing the membrane proton channel, linked together by a central stalk and a peripheral stalk. During catalysis, ATP synthesis in the catalytic domain of F(1) is coupled via a rotary mechanism of the central stalk subunits to proton translocation. Part of the complex F(0) domain and the peripheric stalk, which acts as a stator to hold the catalytic alpha(3)beta(3) subcomplex and subunit a/ATP6 static relative to the rotary elements. This Kluyveromyces lactis (strain ATCC 8585 / CBS 2359 / DSM 70799 / NBRC 1267 / NRRL Y-1140 / WM37) (Yeast) protein is ATP synthase subunit d, mitochondrial (ATP7).